Reading from the N-terminus, the 146-residue chain is Large ribosomal subunit protein uL15 (146 aa).

A disordered region spans residues 1–66; the sequence is MKLHELKPAP…LQRRMPKRGF (66 aa). Gly residues-rich tracts occupy residues 21-31 and 42-52; these read QGIGSGMGKTA and SGGGVRPGFEG.

It belongs to the universal ribosomal protein uL15 family. In terms of assembly, part of the 50S ribosomal subunit.

Functionally, binds to the 23S rRNA. The polypeptide is Large ribosomal subunit protein uL15 (Pelotomaculum thermopropionicum (strain DSM 13744 / JCM 10971 / SI)).